Consider the following 271-residue polypeptide: Mannosyl-3-phosphoglycerate phosphatase (271 aa).

Residue aspartate 13 is the Nucleophile of the active site. 3 residues coordinate Mg(2+): aspartate 13, aspartate 15, and aspartate 214.

This sequence belongs to the HAD-like hydrolase superfamily. MPGP family. Requires Mg(2+) as cofactor.

It localises to the cytoplasm. It carries out the reaction 2-O-(alpha-D-mannosyl)-3-phosphoglycerate + H2O = (2R)-2-O-(alpha-D-mannosyl)-glycerate + phosphate. The polypeptide is Mannosyl-3-phosphoglycerate phosphatase (yedP) (Escherichia coli O6:K15:H31 (strain 536 / UPEC)).